The sequence spans 979 residues: Calsyntenin-1 (979 aa).

The first 28 residues, 1-28, serve as a signal peptide directing secretion; it reads MLRRPAPALAPAVRLLLAGLLCGGGVWA. Residues 29–859 lie on the Extracellular side of the membrane; the sequence is ARVNKHKPWL…PHPFAVVPST (831 aa). 2 Cadherin domains span residues 38-164 and 165-265; these read LEPT…APVF and KEKS…SPGW. Residues asparagine 346, asparagine 366, and asparagine 515 are each glycosylated (N-linked (GlcNAc...) asparagine). Residues 860-880 traverse the membrane as a helical segment; sequence ATVVIVVCVSFLVFMIILGVF. Residues 881 to 979 lie on the Cytoplasmic side of the membrane; it reads RIRAAHQRTM…LEWDDSTLSY (99 aa). Residues 915–979 form a disordered region; that stretch reads METYEDQHSS…LEWDDSTLSY (65 aa). A compositionally biased stretch (acidic residues) spans 925–959; the sequence is EEEEEEEEEEESEDGEEEEDITSAESESSEEEEGG.

Belongs to the calsyntenin family. Directly interacts with APBA2. Forms a tripartite complex with APBA2 and APP. The CTF1 chain interacts with PSEN1. Interacts with KLC1 and APBB1. In terms of assembly, interacts with APBB1; this interaction stabilizes AlcICD metabolism. As to quaternary structure, interacts with PSEN1. In terms of processing, proteolytically processed under normal cellular conditions. A primary zeta-cleavage generates a large extracellular (soluble) N-terminal domain (sAlc) and a short C-terminal transmembrane fragment (CTF1). A secondary cleavage catalyzed by presenilin gamma-secretase within the transmembrane domain releases the beta-Alc-alpha chain in the extracellular milieu and produces an intracellular fragment (AlcICD). Beta-Alc-alpha secretion is largely dependent upon PSEN1 and PSEN2. This processing is strongly suppressed in the tripartite complex formed with APBA2 and APP, which seems to prevent the association with PSEN1. Highly expressed in the brain (at protein level), with over 90% of the neurons expressing detectable amounts. In the brain, relatively high levels in the cerebral cortex, striatum, hippocampus and thalamus. Moderate levels in the cerebellum. Low levels in the olfactory bulb, midbrain and pons (at protein level). Not detected in Purkinje cells. Expressed at low levels in the lung (at protein level). At the mRNA level, weakly detected in the kidney, lung, skeletal muscle, heart and testis. Not expressed in the sciatic nerve fiber.

It localises to the postsynaptic cell membrane. The protein resides in the endoplasmic reticulum membrane. It is found in the golgi apparatus membrane. The protein localises to the cell projection. Its subcellular location is the neuron projection. It localises to the vesicle. The protein resides in the nucleus. Postsynaptic adhesion molecule that binds to presynaptic neurexins to mediate both excitatory and inhibitory synapse formation. Promotes synapse development by acting as a cell adhesion molecule at the postsynaptic membrane, which associates with neurexin-alpha at the presynaptic membrane. Also functions as a cargo in axonal anterograde transport by acting as a molecular adapter that promotes KLC1 association with vesicles. Complex formation with APBA2 and APP, stabilizes APP metabolism and enhances APBA2-mediated suppression of beta-APP40 secretion, due to the retardation of intracellular APP maturation. Functionally, as intracellular fragment AlcICD, suppresses APBB1-dependent transactivation stimulated by APP C-terminal intracellular fragment (AICD), most probably by competing with AICD for APBB1-binding. In terms of biological role, in complex with APBA2 and C99, a C-terminal APP fragment, abolishes C99 interaction with PSEN1 and thus APP C99 cleavage by gamma-secretase, most probably through stabilization of the direct interaction between APBA2 and APP. This is Calsyntenin-1 from Mus musculus (Mouse).